The following is a 564-amino-acid chain: Sphingomyelin phosphodiesterase 1 (564 aa).

Positions 1 to 17 (MRIIYLISTVLLIYTNA) are cleaved as a signal peptide. The 85-residue stretch at 37–121 (FQPLCISCTG…IILPDCADPT (85 aa)) folds into the Saposin B-type domain. Intrachain disulfides connect cysteine 41–cysteine 117, cysteine 44–cysteine 110, and cysteine 72–cysteine 83. N-linked (GlcNAc...) asparagine glycosylation occurs at asparagine 151. Residues aspartate 165 and histidine 167 each contribute to the Zn(2+) site. 2 disulfides stabilise this stretch: cysteine 180-cysteine 185 and cysteine 186-cysteine 206. An N-linked (GlcNAc...) asparagine glycan is attached at asparagine 221. Residues aspartate 234 and asparagine 274 each contribute to the Zn(2+) site. A disulfide bond links cysteine 341 and cysteine 389. Asparagine 351 carries N-linked (GlcNAc...) asparagine glycosylation. Histidine 381, histidine 415, and histidine 417 together coordinate Zn(2+). An N-linked (GlcNAc...) asparagine glycan is attached at asparagine 430. 2 cysteine pairs are disulfide-bonded: cysteine 538–cysteine 542 and cysteine 548–cysteine 561. Asparagine 556 is a glycosylation site (N-linked (GlcNAc...) asparagine).

It belongs to the acid sphingomyelinase family. It depends on Zn(2+) as a cofactor.

Its subcellular location is the secreted. The catalysed reaction is a sphingomyelin + H2O = phosphocholine + an N-acylsphing-4-enine + H(+). It carries out the reaction an N-acyl-15-methylhexadecasphing-4-enine-1-phosphocholine + H2O = an N-acyl-15-methylhexadecasphing-4-enine + phosphocholine + H(+). Its pathway is lipid metabolism; sphingolipid metabolism. In terms of biological role, sphingomyelin phosphodiesterase (sphingomyelinase) that converts sphingomyelin to ceramide (N-acyl-sphingoid base) and phosphocholine at acidic pH. Displays its enzymatic activity when secreted. May play distinct roles in signaling. This Caenorhabditis elegans protein is Sphingomyelin phosphodiesterase 1 (asm-1).